We begin with the raw amino-acid sequence, 452 residues long: Exodeoxyribonuclease 7 large subunit (452 aa).

The protein belongs to the XseA family. Heterooligomer composed of large and small subunits.

It localises to the cytoplasm. It carries out the reaction Exonucleolytic cleavage in either 5'- to 3'- or 3'- to 5'-direction to yield nucleoside 5'-phosphates.. In terms of biological role, bidirectionally degrades single-stranded DNA into large acid-insoluble oligonucleotides, which are then degraded further into small acid-soluble oligonucleotides. In Bacillus cereus (strain 03BB102), this protein is Exodeoxyribonuclease 7 large subunit.